A 508-amino-acid polypeptide reads, in one-letter code: Serine carboxypeptidase 3 (508 aa).

The N-terminal stretch at 1–19 (MVTTPRLVSLLLLLALCAA) is a signal peptide. Positions 20–80 (AAGALRLPPD…PGQLLERRVT (61 aa)) are excised as a propeptide. Residues 48–67 (PKDSSSSSGRHGARVGEGNE) are disordered. The residue at position 81 (Leu-81) is a Blocked amino end (Leu). Intrachain disulfides connect Cys-133-Cys-373, Cys-301-Cys-316, and Cys-339-Cys-344. Asn-151 is a glycosylation site (N-linked (GlcNAc...) asparagine). Ser-223 is an active-site residue. Residue Asp-411 is part of the active site. Cys-414 provides a ligand contact to substrate. His-468 is an active-site residue. Positions 492–508 (EAVPEEESSTTSFYAAM) are excised as a propeptide.

It belongs to the peptidase S10 family. In terms of assembly, monomer.

It is found in the secreted. It catalyses the reaction Release of a C-terminal amino acid with broad specificity.. Inhibited by mercuric ions. This Hordeum vulgare (Barley) protein is Serine carboxypeptidase 3 (CBP3).